The chain runs to 825 residues: Penicillin-binding protein 1A (825 aa).

The Cytoplasmic portion of the chain corresponds to 1–6 (MKFIKR). Residues 7-27 (LLVFSLICIILGVTTIFGFYF) traverse the membrane as a helical; Signal-anchor for type II membrane protein segment. Residues 28–825 (YVKSDLPDVA…YSTSSGEELF (798 aa)) lie on the Periplasmic side of the membrane. Positions 48-216 (MQVFSQDGKL…STMNPIYSVE (169 aa)) are transglycosylase. E86 serves as the catalytic Proton donor; for transglycosylase activity. The transpeptidase stretch occupies residues 413-752 (PRTQDGAITA…GKTALPAWVE (340 aa)). S471 serves as the catalytic Acyl-ester intermediate; for transpeptidase activity.

In the N-terminal section; belongs to the glycosyltransferase 51 family. The protein in the C-terminal section; belongs to the transpeptidase family.

It is found in the cell inner membrane. It carries out the reaction [GlcNAc-(1-&gt;4)-Mur2Ac(oyl-L-Ala-gamma-D-Glu-L-Lys-D-Ala-D-Ala)](n)-di-trans,octa-cis-undecaprenyl diphosphate + beta-D-GlcNAc-(1-&gt;4)-Mur2Ac(oyl-L-Ala-gamma-D-Glu-L-Lys-D-Ala-D-Ala)-di-trans,octa-cis-undecaprenyl diphosphate = [GlcNAc-(1-&gt;4)-Mur2Ac(oyl-L-Ala-gamma-D-Glu-L-Lys-D-Ala-D-Ala)](n+1)-di-trans,octa-cis-undecaprenyl diphosphate + di-trans,octa-cis-undecaprenyl diphosphate + H(+). The catalysed reaction is Preferential cleavage: (Ac)2-L-Lys-D-Ala-|-D-Ala. Also transpeptidation of peptidyl-alanyl moieties that are N-acyl substituents of D-alanine.. It participates in cell wall biogenesis; peptidoglycan biosynthesis. Functionally, cell wall formation. Synthesis of cross-linked peptidoglycan from the lipid intermediates. The enzyme has a penicillin-insensitive transglycosylase N-terminal domain (formation of linear glycan strands) and a penicillin-sensitive transpeptidase C-terminal domain (cross-linking of the peptide subunits). The polypeptide is Penicillin-binding protein 1A (mrcA) (Vibrio cholerae serotype O1 (strain ATCC 39315 / El Tor Inaba N16961)).